A 226-amino-acid polypeptide reads, in one-letter code: Glycerol-3-phosphate acyltransferase (226 aa).

The next 6 membrane-spanning stretches (helical) occupy residues 1–21, 56–76, 102–122, 134–154, 159–178, and 182–197; these read MGLWLSLCGAVVVVAYLLGSF, GPGAFVLGLDCLKGVLAIALV, LVTLAGIAAILGHSKSIFLGF, ILLAMNWQVGLATFGVFAVVV, IVSLSSIMGAIAVSIVMVVL, and LPYILFGIAGGLYVIL.

This sequence belongs to the PlsY family. Probably interacts with PlsX.

Its subcellular location is the cell inner membrane. The enzyme catalyses an acyl phosphate + sn-glycerol 3-phosphate = a 1-acyl-sn-glycero-3-phosphate + phosphate. Its pathway is lipid metabolism; phospholipid metabolism. Functionally, catalyzes the transfer of an acyl group from acyl-phosphate (acyl-PO(4)) to glycerol-3-phosphate (G3P) to form lysophosphatidic acid (LPA). This enzyme utilizes acyl-phosphate as fatty acyl donor, but not acyl-CoA or acyl-ACP. The polypeptide is Glycerol-3-phosphate acyltransferase (Trichormus variabilis (strain ATCC 29413 / PCC 7937) (Anabaena variabilis)).